The sequence spans 238 residues: Ribonuclease PH (238 aa).

Phosphate-binding positions include R86 and G124–R126.

This sequence belongs to the RNase PH family. In terms of assembly, homohexameric ring arranged as a trimer of dimers.

It catalyses the reaction tRNA(n+1) + phosphate = tRNA(n) + a ribonucleoside 5'-diphosphate. In terms of biological role, phosphorolytic 3'-5' exoribonuclease that plays an important role in tRNA 3'-end maturation. Removes nucleotide residues following the 3'-CCA terminus of tRNAs; can also add nucleotides to the ends of RNA molecules by using nucleoside diphosphates as substrates, but this may not be physiologically important. Probably plays a role in initiation of 16S rRNA degradation (leading to ribosome degradation) during starvation. This is Ribonuclease PH from Histophilus somni (strain 129Pt) (Haemophilus somnus).